Reading from the N-terminus, the 287-residue chain is 2-dehydro-3-deoxyphosphooctonate aldolase (287 aa).

Belongs to the KdsA family.

It localises to the cytoplasm. It catalyses the reaction D-arabinose 5-phosphate + phosphoenolpyruvate + H2O = 3-deoxy-alpha-D-manno-2-octulosonate-8-phosphate + phosphate. It functions in the pathway carbohydrate biosynthesis; 3-deoxy-D-manno-octulosonate biosynthesis; 3-deoxy-D-manno-octulosonate from D-ribulose 5-phosphate: step 2/3. It participates in bacterial outer membrane biogenesis; lipopolysaccharide biosynthesis. This chain is 2-dehydro-3-deoxyphosphooctonate aldolase, found in Nitrobacter hamburgensis (strain DSM 10229 / NCIMB 13809 / X14).